The following is a 490-amino-acid chain: Cobyric acid synthase (490 aa).

A GATase cobBQ-type domain is found at 252-439 (RLKVVVPVLP…LHGLFESTAA (188 aa)). Cys333 serves as the catalytic Nucleophile. The active site involves His431.

Belongs to the CobB/CobQ family. CobQ subfamily.

It participates in cofactor biosynthesis; adenosylcobalamin biosynthesis. In terms of biological role, catalyzes amidations at positions B, D, E, and G on adenosylcobyrinic A,C-diamide. NH(2) groups are provided by glutamine, and one molecule of ATP is hydrogenolyzed for each amidation. In Pseudomonas aeruginosa (strain UCBPP-PA14), this protein is Cobyric acid synthase.